The following is a 350-amino-acid chain: Anthranilate phosphoribosyltransferase (350 aa).

5-phospho-alpha-D-ribose 1-diphosphate is bound by residues Gly-88, 91–92 (GD), Thr-96, 98–101 (NIST), 116–124 (KHGGRSVSS), and Ser-128. Gly-88 lines the anthranilate pocket. Ser-100 contributes to the Mg(2+) binding site. Arg-174 is an anthranilate binding site. Mg(2+) contacts are provided by Asp-233 and Glu-234.

This sequence belongs to the anthranilate phosphoribosyltransferase family. As to quaternary structure, homodimer. It depends on Mg(2+) as a cofactor.

It carries out the reaction N-(5-phospho-beta-D-ribosyl)anthranilate + diphosphate = 5-phospho-alpha-D-ribose 1-diphosphate + anthranilate. Its pathway is amino-acid biosynthesis; L-tryptophan biosynthesis; L-tryptophan from chorismate: step 2/5. Its function is as follows. Catalyzes the transfer of the phosphoribosyl group of 5-phosphorylribose-1-pyrophosphate (PRPP) to anthranilate to yield N-(5'-phosphoribosyl)-anthranilate (PRA). This is Anthranilate phosphoribosyltransferase from Albidiferax ferrireducens (strain ATCC BAA-621 / DSM 15236 / T118) (Rhodoferax ferrireducens).